A 328-amino-acid chain; its full sequence is Carbonic anhydrase-related protein 11 (328 aa).

Residues 1-23 (MGGAARLSAPQALVLWAALGAAA) form the signal peptide. The 271-residue stretch at 33–303 (DWWSYKENLQ…LAHRALRGNR (271 aa)) folds into the Alpha-carbonic anhydrase domain. A glycan (N-linked (GlcNAc...) asparagine) is linked at Asn118. Residues 300 to 328 (RGNRDPRHPERRCRGPNYRLHVDGGPHGR) form a disordered region. Residues 319-328 (LHVDGGPHGR) show a composition bias toward basic and acidic residues.

This sequence belongs to the alpha-carbonic anhydrase family.

The protein localises to the secreted. Its function is as follows. Does not have a catalytic activity. The sequence is that of Carbonic anhydrase-related protein 11 (Ca11) from Mus musculus (Mouse).